The sequence spans 288 residues: Stress response protein YhaX (288 aa).

This Bacillus subtilis (strain 168) protein is Stress response protein YhaX (yhaX).